The chain runs to 591 residues: Aspartate--tRNA(Asp/Asn) ligase (591 aa).

Glutamate 176 lines the L-aspartate pocket. Positions 200-203 (QLFK) are aspartate. Position 222 (arginine 222) interacts with L-aspartate. ATP-binding positions include 222–224 (RDE) and glutamine 231. Residue histidine 450 participates in L-aspartate binding. Glutamate 484 serves as a coordination point for ATP. An L-aspartate-binding site is contributed by arginine 491. 536–539 (GLDR) provides a ligand contact to ATP.

This sequence belongs to the class-II aminoacyl-tRNA synthetase family. Type 1 subfamily. As to quaternary structure, homodimer.

The protein resides in the cytoplasm. The catalysed reaction is tRNA(Asx) + L-aspartate + ATP = L-aspartyl-tRNA(Asx) + AMP + diphosphate. Functionally, aspartyl-tRNA synthetase with relaxed tRNA specificity since it is able to aspartylate not only its cognate tRNA(Asp) but also tRNA(Asn). Reaction proceeds in two steps: L-aspartate is first activated by ATP to form Asp-AMP and then transferred to the acceptor end of tRNA(Asp/Asn). This Bacillus thuringiensis (strain Al Hakam) protein is Aspartate--tRNA(Asp/Asn) ligase.